Reading from the N-terminus, the 604-residue chain is MSRSAAASGGPRRPDQHLSPAPCGASGPPETFRTESDGAGTMNKLRQSLRRRKPAYVPEASRPHQWQADEDAVRKGTCSFPVRYLGHVEVEESRGMHVCEDAVKKLKAMGRKSVKSVLWVSADGLRVVDDKTKDLLVDQTIEKVSFCAPDRNLDKAFSYICRDGTTRRWICHCFLALKDSGERLSHAVGCAFAACLERKQRREKECGVTAAFDASRTSFAREGSFRLSGGGRPAEREAGDKKKAEAAAAPAVAPGPAQPGHVSPTPATTSPGEKGEAGTPVAAGTTAAAIPRRHAPLEQLVRQGSFRGFPALSQKNSPFKRQLSLRLNELPSTLQRRTDFQVKGTVPEMEPPGTGDSDGINALCTQISSSFASAGAPASGPPPATTGTSAWGEPSVPAAAAFQPGHKRTPSEAERWLEEVSQVAKAQQQQQQQQQQQQQQQATSVPPMPTMAPTLQPFSAPVGPFDTAAAQVAVFLPPTHMQPPFVPAYPGLGYPPMPRVPVVGITPSQMVANAFCSAAQLQPQPATLLGKAGAFPPPAAPSAPGGQARPRPNGAPWPPEPAPAPAPELDPFEAQWAALEGKPAVEKPSNPFSGDLQKTFEIEL.

4 disordered regions span residues 1–68 (MSRS…QWQA), 223–283 (GSFR…PVAA), 372–457 (ASAG…TLQP), and 531–604 (KAGA…EIEL). The region spanning 74-225 (RKGTCSFPVR…RTSFAREGSF (152 aa)) is the PID domain. 2 positions are modified to phosphoserine: serine 224 and serine 228. Over residues 233–245 (PAEREAGDKKKAE) the composition is skewed to basic and acidic residues. The span at 246-260 (AAAAPAVAPGPAQPG) shows a compositional bias: low complexity. Position 263 is a phosphoserine (serine 263). Threonine 279 carries the post-translational modification Phosphothreonine. Over residues 409 to 418 (TPSEAERWLE) the composition is skewed to basic and acidic residues. Serine 411 bears the Phosphoserine mark. Low complexity-rich tracts occupy residues 427-441 (QQQQ…QQQQ) and 542-552 (SAPGGQARPRP). The segment covering 553 to 568 (NGAPWPPEPAPAPAPE) has biased composition (pro residues).

Interacts (via PTB domain) with MAP3K7IP2 (via C-terminal). Interacts (via C-terminal) with TRAF6 (via TRAF domains). Associates with EPS15 and NOTCH1. As to expression, preferentially expressed in the nervous system. In the developing neocortex, expressed in postmitotic neurons in the cortical plate but not in progenitors within the ventricular zone.

It is found in the cytoplasm. In terms of biological role, plays a role in the process of neurogenesis. Required throughout embryonic neurogenesis to maintain neural progenitor cells, also called radial glial cells (RGCs), by allowing their daughter cells to choose progenitor over neuronal cell fate. Not required for the proliferation of neural progenitor cells before the onset of embryonic neurogenesis. Also required postnatally in the subventricular zone (SVZ) neurogenesis by regulating SVZ neuroblasts survival and ependymal wall integrity. Negative regulator of NF-kappa-B signaling pathway. The inhibition of NF-kappa-B activation is mediated at least in part, by preventing MAP3K7IP2 to interact with polyubiquitin chains of TRAF6 and RIPK1 and by stimulating the 'Lys-48'-linked polyubiquitination and degradation of TRAF6 in cortical neurons. This chain is Numb-like protein (Numbl), found in Mus musculus (Mouse).